A 190-amino-acid polypeptide reads, in one-letter code: UPF0340 protein BC_5317 (190 aa).

Belongs to the UPF0340 family.

This is UPF0340 protein BC_5317 from Bacillus cereus (strain ATCC 14579 / DSM 31 / CCUG 7414 / JCM 2152 / NBRC 15305 / NCIMB 9373 / NCTC 2599 / NRRL B-3711).